Here is a 213-residue protein sequence, read N- to C-terminus: V-type ATP synthase subunit D (213 aa).

This sequence belongs to the V-ATPase D subunit family.

In terms of biological role, produces ATP from ADP in the presence of a proton gradient across the membrane. The sequence is that of V-type ATP synthase subunit D from Clostridium botulinum (strain Alaska E43 / Type E3).